Consider the following 900-residue polypeptide: MKASEEEYRLNFFIKNDFKRKICKSCKTPFWTRDEKKEYCSDIPCTDYYFFDINIKSQPLTVKEAREKFLSFFEKRGHTRISPKPVLARWREDLYLTIASIVDFQPHVTSGLVPPPANPLVVSQPSIRLEDIDNVGITFGRHLTTFEMAAHHAFNYPDHYVYWKEETTAYATEFFTKELGIPEEELNFKESWWEGGGNAGPCLEVTVGGLELATLVFMQYKITDNGNYTPLKLKIVDTGYGVERIAWITQKTPSAFHAIYGNLVYKFFNKIGVAYIDETLLKVASRFAGKIDPDNPDTIKIHRQMVSKELGIDIKAVEEELDRAAKVFQILDHTKTIMLMLADGLVPSNSGEGYLGRLVIRRALKVLRLLKSDVRLYELVKEQIDFWKEDFPQVLKNKDYILDAVELEQQRFEKILEKVPSIASTLARKSEITTEDLIQVYDSNGIPPDLLEEELKKKSVKFELPRNFYALVAKRHQTSTIKSAYDKVKLPKDMLEYITALQPTEKLYYKDQYMRSFEGKVLGVYKNYLILDKTTFYPEGGGQLGDTGLIIDEKSSKRYEVIDTQKVNDVIVHILKEEPSTIKVGDNVRGEINWERRYRLMRHHTVTHVILAAAKKVLGEHVWQAGAEKTPEKGRLDITHHKTLTEEEVKLIENYANSVISDRRQVKPLEMNRMEAEMKYGVSIYEGGVPNSATIRLLEIKDWDIESCGGTHVSNTSEIGAVKIINVERIQDGVIRLEYVAGPALVDYIRETQAKIVEASKIIGTSPDQLTSRLRRILNEIEEKNNLIIQYRRIIETELLNNLKPYEINSNKIYIIEGLGDEEENKEILRKLTSTDNTIAISISDNRLQIATSKNMRVDKIVEELLKGGGKGGGKGTFANVILNSKKSKEEIIEIVRKSL.

Zn(2+) contacts are provided by His-604, His-608, Cys-708, and His-712.

Belongs to the class-II aminoacyl-tRNA synthetase family. Requires Zn(2+) as cofactor.

Its subcellular location is the cytoplasm. The catalysed reaction is tRNA(Ala) + L-alanine + ATP = L-alanyl-tRNA(Ala) + AMP + diphosphate. Catalyzes the attachment of alanine to tRNA(Ala) in a two-step reaction: alanine is first activated by ATP to form Ala-AMP and then transferred to the acceptor end of tRNA(Ala). Also edits incorrectly charged Ser-tRNA(Ala) and Gly-tRNA(Ala) via its editing domain. In Saccharolobus islandicus (strain Y.G.57.14 / Yellowstone #1) (Sulfolobus islandicus), this protein is Alanine--tRNA ligase.